The following is a 285-amino-acid chain: Probable endonuclease 4 (285 aa).

Zn(2+) contacts are provided by His69, His109, Glu145, Asp179, His182, His216, Asp229, His231, and Glu261.

It belongs to the AP endonuclease 2 family. Zn(2+) is required as a cofactor.

It catalyses the reaction Endonucleolytic cleavage to 5'-phosphooligonucleotide end-products.. Functionally, endonuclease IV plays a role in DNA repair. It cleaves phosphodiester bonds at apurinic or apyrimidinic (AP) sites, generating a 3'-hydroxyl group and a 5'-terminal sugar phosphate. In Yersinia pseudotuberculosis serotype O:1b (strain IP 31758), this protein is Probable endonuclease 4.